A 311-amino-acid chain; its full sequence is Putative F-box protein At3g28280 (311 aa).

The 43-residue stretch at 1 to 43 (MNSLPEDLLAMILVKLPIKIFTTFKIVCTQWESMVDSPYFRDL) folds into the F-box domain.

The polypeptide is Putative F-box protein At3g28280 (Arabidopsis thaliana (Mouse-ear cress)).